Here is a 210-residue protein sequence, read N- to C-terminus: Orotate phosphoribosyltransferase (210 aa).

Residues Arg96, Lys100, His102, and 122–130 contribute to the 5-phospho-alpha-D-ribose 1-diphosphate site; that span reads EDLISTGGS. An orotate-binding site is contributed by Ser126.

Belongs to the purine/pyrimidine phosphoribosyltransferase family. PyrE subfamily. In terms of assembly, homodimer. The cofactor is Mg(2+).

It carries out the reaction orotidine 5'-phosphate + diphosphate = orotate + 5-phospho-alpha-D-ribose 1-diphosphate. It functions in the pathway pyrimidine metabolism; UMP biosynthesis via de novo pathway; UMP from orotate: step 1/2. Its function is as follows. Catalyzes the transfer of a ribosyl phosphate group from 5-phosphoribose 1-diphosphate to orotate, leading to the formation of orotidine monophosphate (OMP). The chain is Orotate phosphoribosyltransferase (pyrE) from Streptococcus pneumoniae serotype 19F (strain G54).